We begin with the raw amino-acid sequence, 238 residues long: Citrate-binding protein (238 aa).

The N-terminal stretch at 1–31 is a signal peptide; the sequence is MKMKRSPYCFCCSFALLLLVSFLKDRHFCSA. The propeptide at 225–238 is removed in mature form; sequence LEGCNNNHGTWLVQ.

The protein resides in the vacuole. May be a subunit of a vacuolar malate and citrate transporter. The sequence is that of Citrate-binding protein (CBP) from Hevea brasiliensis (Para rubber tree).